We begin with the raw amino-acid sequence, 1366 residues long: DNA-directed RNA polymerase subunit beta'' (1366 aa).

Zn(2+)-binding residues include Cys-220, Cys-291, Cys-298, and Cys-301.

It belongs to the RNA polymerase beta' chain family. RpoC2 subfamily. In terms of assembly, in plastids the minimal PEP RNA polymerase catalytic core is composed of four subunits: alpha, beta, beta', and beta''. When a (nuclear-encoded) sigma factor is associated with the core the holoenzyme is formed, which can initiate transcription. Zn(2+) is required as a cofactor.

The protein localises to the plastid. It is found in the chloroplast. It carries out the reaction RNA(n) + a ribonucleoside 5'-triphosphate = RNA(n+1) + diphosphate. Its function is as follows. DNA-dependent RNA polymerase catalyzes the transcription of DNA into RNA using the four ribonucleoside triphosphates as substrates. The sequence is that of DNA-directed RNA polymerase subunit beta'' from Phaseolus vulgaris (Kidney bean).